A 126-amino-acid polypeptide reads, in one-letter code: MSQFAILGFIALGGAFGACSRYLVSELCVVLLGRGFPYGTLTVNVVGSFIMGLLIAAFESELLATEPWRQIIGLGFLGALTTFSTFSMDNVLLMQQGAFFKMGLNVVLNVTLSITAAWVGFQLLKS.

Transmembrane regions (helical) follow at residues 4-24 (FAIL…RYLV), 38-58 (YGTL…IAAF), 71-91 (IIGL…MDNV), and 104-124 (LNVV…FQLL). Residues Gly78 and Thr81 each contribute to the Na(+) site.

The protein belongs to the fluoride channel Fluc/FEX (TC 1.A.43) family.

Its subcellular location is the cell inner membrane. It catalyses the reaction fluoride(in) = fluoride(out). With respect to regulation, na(+) is not transported, but it plays an essential structural role and its presence is essential for fluoride channel function. Functionally, fluoride-specific ion channel. Important for reducing fluoride concentration in the cell, thus reducing its toxicity. The polypeptide is Fluoride-specific ion channel FluC (Vibrio vulnificus (strain CMCP6)).